The chain runs to 126 residues: Small ribosomal subunit protein uS13 (126 aa).

The tract at residues 92–126 (HRMGLPVRGQRTRTNARTRRGRRQTVAGKKKAPGK) is disordered. Over residues 101 to 126 (QRTRTNARTRRGRRQTVAGKKKAPGK) the composition is skewed to basic residues.

The protein belongs to the universal ribosomal protein uS13 family. Part of the 30S ribosomal subunit. Forms a loose heterodimer with protein S19. Forms two bridges to the 50S subunit in the 70S ribosome.

In terms of biological role, located at the top of the head of the 30S subunit, it contacts several helices of the 16S rRNA. In the 70S ribosome it contacts the 23S rRNA (bridge B1a) and protein L5 of the 50S subunit (bridge B1b), connecting the 2 subunits; these bridges are implicated in subunit movement. Contacts the tRNAs in the A and P-sites. The chain is Small ribosomal subunit protein uS13 from Nostoc sp. (strain PCC 7120 / SAG 25.82 / UTEX 2576).